The following is a 116-amino-acid chain: Large ribosomal subunit protein bL17 (116 aa).

It belongs to the bacterial ribosomal protein bL17 family. As to quaternary structure, part of the 50S ribosomal subunit. Contacts protein L32.

The polypeptide is Large ribosomal subunit protein bL17 (Wolinella succinogenes (strain ATCC 29543 / DSM 1740 / CCUG 13145 / JCM 31913 / LMG 7466 / NCTC 11488 / FDC 602W) (Vibrio succinogenes)).